An 859-amino-acid chain; its full sequence is DNA mismatch repair protein MutS (859 aa).

617-624 (GPNMGGKS) provides a ligand contact to ATP. A disordered region spans residues 799–821 (ETTSLPHEQPRAKPGKPAVPQQS).

This sequence belongs to the DNA mismatch repair MutS family.

In terms of biological role, this protein is involved in the repair of mismatches in DNA. It is possible that it carries out the mismatch recognition step. This protein has a weak ATPase activity. This Pseudomonas syringae pv. syringae (strain B728a) protein is DNA mismatch repair protein MutS.